A 603-amino-acid chain; its full sequence is MAMYTSIMLMTLASLALPIFATLVNPNKTHSYPNYVKTTMMYAFITSLIPTTLYIFSNQETTIWSWHWMMTQTLDLTLSFKLDYFSMMFIPIALFITWSIMEFSLWYMSSDPNINQFFKYLLIFLITMLILITANNLFQLFIGWEGVGIMSFLLISWWHARTDANTAAIQAVLYNRIGDIGLILAMVWFLLHYNSWDFQQMLALNPHPSPLPLMGLLLAAVGKSAQFGLHPWLPSAMEGPTPVSALLHSSTMVVAGVFLLIRFHPLMENDTLTQNLTLCLGAITTLFMAMCALTQNDIKKIVAFSTSSQLGLMMITIGINQPYLAFLHICTHAFFKAMLFICSGSIIHNLNNEQDIRKMGGLFKTMPLTSTSLIIGNLALTGIPFLTGFYSKDLIIEATSTSYTNAWALSITLIATSLTSAYSTRTILLTLTGQPRFPTLTNINENNPALLNPIKRLTTASMITGFLITNNIPPTSLPQPTMPLHLKLLALYMTALGFIITLDLTLMTNKLKVKTPPQTFKFSNMLGYFPTIAHRMIPHQNLLMSQNLALLLLDSMWLEKSMPKMISQTHITASTTVTAQKSMIKLYFLSFLIPLALALLLMV.

14 helical membrane passes run 4 to 24 (YTSI…ATLV), 36 to 56 (VKTT…LYIF), 87 to 107 (MMFI…SLWY), 122 to 142 (LIFL…QLFI), 171 to 191 (AVLY…WFLL), 211 to 233 (LPLM…HPWL), 241 to 261 (TPVS…FLLI), 272 to 292 (LTQN…AMCA), 301 to 320 (IVAF…IGIN), 325 to 347 (AFLH…GSII), 370 to 390 (STSL…TGFY), 406 to 422 (AWAL…TSAY), 488 to 508 (LLAL…TLMT), and 583 to 603 (MIKL…LLMV).

The protein belongs to the complex I subunit 5 family. Core subunit of respiratory chain NADH dehydrogenase (Complex I) which is composed of 45 different subunits.

It is found in the mitochondrion inner membrane. The catalysed reaction is a ubiquinone + NADH + 5 H(+)(in) = a ubiquinol + NAD(+) + 4 H(+)(out). Functionally, core subunit of the mitochondrial membrane respiratory chain NADH dehydrogenase (Complex I) which catalyzes electron transfer from NADH through the respiratory chain, using ubiquinone as an electron acceptor. Essential for the catalytic activity and assembly of complex I. In Papio hamadryas (Hamadryas baboon), this protein is NADH-ubiquinone oxidoreductase chain 5 (MT-ND5).